The sequence spans 306 residues: tRNA pseudouridine synthase B (306 aa).

Residue D43 is the Nucleophile of the active site.

This sequence belongs to the pseudouridine synthase TruB family. Type 1 subfamily.

The catalysed reaction is uridine(55) in tRNA = pseudouridine(55) in tRNA. Responsible for synthesis of pseudouridine from uracil-55 in the psi GC loop of transfer RNAs. The protein is tRNA pseudouridine synthase B of Heliobacterium modesticaldum (strain ATCC 51547 / Ice1).